Reading from the N-terminus, the 362-residue chain is Large ribosomal subunit protein uL2m (362 aa).

The transit peptide at 1–23 (MLSYNRFRGYLIPQIHALKLFRY) directs the protein to the mitochondrion. Positions 306-362 (AMNPCDHPHGGGGGKSIGNKPSQSPWGVLAKGGYKTRRGKNVNKLLVRDRPRGKEKR) are disordered. Basic and acidic residues predominate over residues 351 to 362 (LVRDRPRGKEKR).

The protein belongs to the universal ribosomal protein uL2 family. Component of the mitochondrial large ribosomal subunit (mt-LSU). Mature yeast 74S mitochondrial ribosomes consist of a small (37S) and a large (54S) subunit. The 37S small subunit contains a 15S ribosomal RNA (15S mt-rRNA) and at least 32 different proteins. The 54S large subunit contains a 21S rRNA (21S mt-rRNA) and at least 45 different proteins. uL2m has a Na/K ligand binding site.

The protein resides in the mitochondrion. In terms of biological role, component of the mitochondrial ribosome (mitoribosome), a dedicated translation machinery responsible for the synthesis of mitochondrial genome-encoded proteins, including at least some of the essential transmembrane subunits of the mitochondrial respiratory chain. The mitoribosomes are attached to the mitochondrial inner membrane and translation products are cotranslationally integrated into the membrane. This chain is Large ribosomal subunit protein uL2m (rml2), found in Schizosaccharomyces pombe (strain 972 / ATCC 24843) (Fission yeast).